Reading from the N-terminus, the 309-residue chain is Neuropeptide-like 1 (309 aa).

The first 28 residues, 1–28 (MQAVLQSAHSSRRLMLLLSMLLNAAIQP), serve as a signal peptide directing secretion. The propeptide occupies 29-99 (RSIIVSATDD…GEYPDYLEED (71 aa)). The tract at residues 126 to 147 (GQLPTAEPGEDYGDADSGEPSE) is disordered. Residues 133–144 (PGEDYGDADSGE) are compositionally biased toward acidic residues. A Tyrosine amide modification is found at Tyr-164. An Asparagine amide modification is found at Asn-182.

MTYamide peptide: Expressed in the larval CNS (at protein level). NAP peptide: Expressed in the larval CNS (at protein level). IPNamide peptide: Expressed in the ventral ganglion of the third larval instar and adult brain (at protein level).

The protein resides in the secreted. Functionally, acts as a ligand for the receptor-type guanylate cyclase Gyc76C. Stimulates Gyc76c-dependent cGMP production and modulates the IMD innate immune pathway in response to salt stress by inducing nuclear translocation of NF-kappa-B protein Rel which leads to increased expression of the antimicrobial peptide diptericin. Does not appear to play a role in Gyc76C-mediated wing development. In Drosophila melanogaster (Fruit fly), this protein is Neuropeptide-like 1 (Nplp1).